We begin with the raw amino-acid sequence, 48 residues long: Large ribosomal subunit protein bL33A (48 aa).

Belongs to the bacterial ribosomal protein bL33 family.

The sequence is that of Large ribosomal subunit protein bL33A from Bacillus mycoides (strain KBAB4) (Bacillus weihenstephanensis).